Here is a 251-residue protein sequence, read N- to C-terminus: tRNA pseudouridine synthase A (251 aa).

Residue Asp54 is the Nucleophile of the active site. Tyr111 lines the substrate pocket.

It belongs to the tRNA pseudouridine synthase TruA family. As to quaternary structure, homodimer.

The catalysed reaction is uridine(38/39/40) in tRNA = pseudouridine(38/39/40) in tRNA. Its function is as follows. Formation of pseudouridine at positions 38, 39 and 40 in the anticodon stem and loop of transfer RNAs. In Mycoplasma mycoides subsp. mycoides SC (strain CCUG 32753 / NCTC 10114 / PG1), this protein is tRNA pseudouridine synthase A.